A 314-amino-acid polypeptide reads, in one-letter code: MAEDAQGRPAPTSPFFVTIPSKLLPQLPDIPSDRPVLIAGPTASGKSALAVRLVEDGGGVVVNADALQVYDCWRILSARPSAAEEAALPHRLYGHVGARQTYSAGHWLKEVAAVLAEGLRPVIVGGTGLYFSALTEGLAEIPHTPPEVRAEADARLAEAGLARMVAELDAETAARIDLQNPARVQRAWEVLRATGRGLARWQAETAPPLLPLSDATALVIRPDPTWLAQRIDSRFNLMMADGALEEVRAALPGWDPTLPSARAIGAPELVAHLRGEIPLDEAVAAAKLASRQYAKRQRTWFRNRMRLWHEIRLP.

Gly-40–Ser-47 provides a ligand contact to ATP. Thr-42–Ser-47 is a substrate binding site.

This sequence belongs to the IPP transferase family. As to quaternary structure, monomer. The cofactor is Mg(2+).

It carries out the reaction adenosine(37) in tRNA + dimethylallyl diphosphate = N(6)-dimethylallyladenosine(37) in tRNA + diphosphate. Functionally, catalyzes the transfer of a dimethylallyl group onto the adenine at position 37 in tRNAs that read codons beginning with uridine, leading to the formation of N6-(dimethylallyl)adenosine (i(6)A). In Cereibacter sphaeroides (strain KD131 / KCTC 12085) (Rhodobacter sphaeroides), this protein is tRNA dimethylallyltransferase.